The following is a 441-amino-acid chain: Glutamyl-tRNA reductase (441 aa).

Substrate-binding positions include 58 to 61 (TCNR), S116, 121 to 123 (EPD), and Q127. Residue C59 is the Nucleophile of the active site. 195-200 (GAGMAG) lines the NADP(+) pocket.

Belongs to the glutamyl-tRNA reductase family. As to quaternary structure, homodimer.

It carries out the reaction (S)-4-amino-5-oxopentanoate + tRNA(Glu) + NADP(+) = L-glutamyl-tRNA(Glu) + NADPH + H(+). It participates in porphyrin-containing compound metabolism; protoporphyrin-IX biosynthesis; 5-aminolevulinate from L-glutamyl-tRNA(Glu): step 1/2. In terms of biological role, catalyzes the NADPH-dependent reduction of glutamyl-tRNA(Glu) to glutamate 1-semialdehyde (GSA). The sequence is that of Glutamyl-tRNA reductase from Ignicoccus hospitalis (strain KIN4/I / DSM 18386 / JCM 14125).